A 101-amino-acid polypeptide reads, in one-letter code: Integration host factor subunit beta (101 aa).

It belongs to the bacterial histone-like protein family. In terms of assembly, heterodimer of an alpha and a beta chain.

Its function is as follows. This protein is one of the two subunits of integration host factor, a specific DNA-binding protein that functions in genetic recombination as well as in transcriptional and translational control. The chain is Integration host factor subunit beta from Rhodopseudomonas palustris (strain BisB5).